The primary structure comprises 179 residues: Large ribosomal subunit protein uL5 (179 aa).

It belongs to the universal ribosomal protein uL5 family. Part of the 50S ribosomal subunit; part of the 5S rRNA/L5/L18/L25 subcomplex. Contacts the 5S rRNA and the P site tRNA. Forms a bridge to the 30S subunit in the 70S ribosome.

Functionally, this is one of the proteins that bind and probably mediate the attachment of the 5S RNA into the large ribosomal subunit, where it forms part of the central protuberance. In the 70S ribosome it contacts protein S13 of the 30S subunit (bridge B1b), connecting the 2 subunits; this bridge is implicated in subunit movement. Contacts the P site tRNA; the 5S rRNA and some of its associated proteins might help stabilize positioning of ribosome-bound tRNAs. In Pelobacter propionicus (strain DSM 2379 / NBRC 103807 / OttBd1), this protein is Large ribosomal subunit protein uL5.